Here is a 23-residue protein sequence, read N- to C-terminus: Thylakoid lumenal 17.4 kDa protein (23 aa).

The disordered stretch occupies residues Ala1–Thr23.

It is found in the plastid. Its subcellular location is the chloroplast thylakoid lumen. This Spinacia oleracea (Spinach) protein is Thylakoid lumenal 17.4 kDa protein.